A 1111-amino-acid polypeptide reads, in one-letter code: Lon protease homolog, mitochondrial (1111 aa).

The transit peptide at 1–21 (MLRSSRSRLVTRNILLRQFKN) directs the protein to the mitochondrion. Disordered regions lie at residues 85 to 177 (IQLK…AKQP) and 288 to 311 (PPTS…ENNE). The span at 88–125 (KQDDKGKDIDQPESENRKKEEEQVPTEEKDNDTAKESE) shows a compositional bias: basic and acidic residues. Residues 126-135 (TSQQRDSVAE) are compositionally biased toward polar residues. Gly residues predominate over residues 145–167 (GASGNGESSGNGSGDDGNNGSGN). The 266-residue stretch at 185–450 (VMALPISRRP…KALTVLKKEL (266 aa)) folds into the Lon N-terminal domain. The segment covering 294 to 306 (NLKDESDVSKSEG) has biased composition (basic and acidic residues). 602 to 609 (GPPGVGKT) serves as a coordination point for ATP. 2 stretches are compositionally biased toward basic and acidic residues: residues 819–835 (ENEE…KQSE) and 853–865 (ELIK…DNKG). The tract at residues 819–866 (ENEEVKDQKDIKVKQSENKSSAEASTVESTTEENELIKTQKSHDNKGS) is disordered. Residues 899–1085 (STPPGVVMGL…EDVFQRLFGD (187 aa)) form the Lon proteolytic domain. Active-site residues include serine 991 and lysine 1034.

It belongs to the peptidase S16 family. As to quaternary structure, homohexamer or homoheptamer. Organized in a ring with a central cavity.

It localises to the mitochondrion matrix. The catalysed reaction is Hydrolysis of proteins in presence of ATP.. Functionally, ATP-dependent serine protease that mediates the selective degradation of misfolded, unassembled or oxidatively damaged polypeptides as well as certain short-lived regulatory proteins in the mitochondrial matrix. May also have a chaperone function in the assembly of inner membrane protein complexes. Participates in the regulation of mitochondrial gene expression and in the maintenance of the integrity of the mitochondrial genome. Binds to mitochondrial DNA in a site-specific manner. This is Lon protease homolog, mitochondrial from Kluyveromyces lactis (strain ATCC 8585 / CBS 2359 / DSM 70799 / NBRC 1267 / NRRL Y-1140 / WM37) (Yeast).